A 497-amino-acid polypeptide reads, in one-letter code: Probable cytosol aminopeptidase (497 aa).

Mn(2+) contacts are provided by lysine 263 and aspartate 268. Residue lysine 275 is part of the active site. Residues aspartate 286, aspartate 345, and glutamate 347 each coordinate Mn(2+). Arginine 349 is a catalytic residue.

The protein belongs to the peptidase M17 family. Mn(2+) serves as cofactor.

Its subcellular location is the cytoplasm. It carries out the reaction Release of an N-terminal amino acid, Xaa-|-Yaa-, in which Xaa is preferably Leu, but may be other amino acids including Pro although not Arg or Lys, and Yaa may be Pro. Amino acid amides and methyl esters are also readily hydrolyzed, but rates on arylamides are exceedingly low.. The enzyme catalyses Release of an N-terminal amino acid, preferentially leucine, but not glutamic or aspartic acids.. Presumably involved in the processing and regular turnover of intracellular proteins. Catalyzes the removal of unsubstituted N-terminal amino acids from various peptides. The sequence is that of Probable cytosol aminopeptidase from Sinorhizobium medicae (strain WSM419) (Ensifer medicae).